The chain runs to 133 residues: Adenosine 5'-monophosphoramidase hnt1 (133 aa).

Positions 4 to 107 (IFCKIVKGDI…IPKPNEEYGL (104 aa)) constitute an HIT domain. Residues 29–30 (DI), N81, 87–89 (HQF), and 94–96 (HFH) each bind AMP. The Histidine triad motif signature appears at 92 to 96 (HVHFH). The active-site Tele-AMP-histidine intermediate is the H94.

Belongs to the HINT family. As to quaternary structure, homodimer. It depends on Mg(2+) as a cofactor.

The protein localises to the nucleus. The enzyme catalyses adenosine 5'-phosphoramidate + H2O = AMP + NH4(+). Functionally, hydrolyzes adenosine 5'-monophosphoramidate substrates such as AMP-morpholidate, AMP-N-alanine methyl ester, AMP-alpha-acetyl lysine methyl ester and AMP-NH2. The polypeptide is Adenosine 5'-monophosphoramidase hnt1 (hnt1) (Schizosaccharomyces pombe (strain 972 / ATCC 24843) (Fission yeast)).